A 452-amino-acid polypeptide reads, in one-letter code: Tripartite motif-containing protein 49 (452 aa).

An RING-type zinc finger spans residues 15–56 (CPLCMNYFIDPVTIDCGHSFCRPCFYLNWQDIPFLVQCSECT). The B box-type zinc finger occupies 88–129 (SEEQMCGTHRETKKIFCEVDRSLLCLLCSSSQEHRYHRHRPI). Residues C93, H96, C115, and H121 each contribute to the Zn(2+) site. In terms of domain architecture, B30.2/SPRY spans 269–452 (ELSAGPITGL…LRPIFCCIHF (184 aa)).

Belongs to the TRIM/RBCC family. In terms of tissue distribution, preferentially expressed in testis.

The protein is Tripartite motif-containing protein 49 (TRIM49) of Homo sapiens (Human).